Here is a 437-residue protein sequence, read N- to C-terminus: Phosphomethylpyrimidine synthase (437 aa).

Substrate is bound by residues asparagine 69, methionine 98, tyrosine 127, histidine 163, 185–187 (SRG), 226–229 (DACR), and glutamate 265. Residue histidine 269 coordinates Zn(2+). Residue tyrosine 292 coordinates substrate. Residue histidine 333 participates in Zn(2+) binding. Residues cysteine 409, cysteine 412, and cysteine 416 each contribute to the [4Fe-4S] cluster site.

The protein belongs to the ThiC family. Requires [4Fe-4S] cluster as cofactor.

The catalysed reaction is 5-amino-1-(5-phospho-beta-D-ribosyl)imidazole + S-adenosyl-L-methionine = 4-amino-2-methyl-5-(phosphooxymethyl)pyrimidine + CO + 5'-deoxyadenosine + formate + L-methionine + 3 H(+). Its pathway is cofactor biosynthesis; thiamine diphosphate biosynthesis. Catalyzes the synthesis of the hydroxymethylpyrimidine phosphate (HMP-P) moiety of thiamine from aminoimidazole ribotide (AIR) in a radical S-adenosyl-L-methionine (SAM)-dependent reaction. The protein is Phosphomethylpyrimidine synthase of Clostridium botulinum (strain ATCC 19397 / Type A).